The chain runs to 483 residues: 3-isopropylmalate dehydratase large subunit (483 aa).

[4Fe-4S] cluster-binding residues include cysteine 352, cysteine 412, and cysteine 415.

Belongs to the aconitase/IPM isomerase family. LeuC type 1 subfamily. Heterodimer of LeuC and LeuD. The cofactor is [4Fe-4S] cluster.

The catalysed reaction is (2R,3S)-3-isopropylmalate = (2S)-2-isopropylmalate. Its pathway is amino-acid biosynthesis; L-leucine biosynthesis; L-leucine from 3-methyl-2-oxobutanoate: step 2/4. Catalyzes the isomerization between 2-isopropylmalate and 3-isopropylmalate, via the formation of 2-isopropylmaleate. The polypeptide is 3-isopropylmalate dehydratase large subunit (Paenarthrobacter aurescens (strain TC1)).